The primary structure comprises 1014 residues: Resistance to glucose repression protein 1 (1014 aa).

Residues 1–63 (MSTNLANYFA…AVQAKNDDDF (63 aa)) form a disordered region. Ser2 carries the post-translational modification N-acetylserine. Over residues 11-34 (GKKDIENEHVNRNASHESNSKSDV) the composition is skewed to basic and acidic residues. Thr73 bears the Phosphothreonine mark. Position 75 is a phosphoserine (Ser75). 2 disordered regions span residues 90 to 144 (LGRS…YLIP) and 236 to 270 (SEGN…KNSK). Residues 104–115 (YDNSSNNSSSNS) show a composition bias toward low complexity. Phosphoserine occurs at positions 242 and 254. A compositionally biased stretch (basic and acidic residues) spans 247–260 (DLERGYGSDDENSK). Positions 277 to 283 (KPILKKR) match the Nuclear localization signal motif. The residue at position 311 (Ser311) is a Phosphoserine. Positions 340-463 (YPKESNSSVS…SEKSNKPTKN (124 aa)) are disordered. Polar residues-rich tracts occupy residues 343–352 (ESNSSVSLKS), 361–370 (STIPNPVGEN), 389–407 (HVQN…LENS), and 415–455 (LDQN…NPSE). Position 421 is a phosphoserine (Ser421). Tyr480 bears the Phosphotyrosine mark. Ser490 carries the phosphoserine modification. Disordered regions lie at residues 531-557 (EHLN…DEEH) and 570-591 (SDSG…TTSR). 3 positions are modified to phosphoserine: Ser570, Ser572, and Ser576. Residues 578–591 (ITDNSSVASSTTSR) show a composition bias toward polar residues. Residues 595–599 (RPIIK) carry the Nuclear localization signal motif. Ser610, Ser614, and Ser680 each carry phosphoserine. The interval 690–897 (SKEKHVPQLH…QSFRIVNNTP (208 aa)) is disordered. Low complexity predominate over residues 722–740 (YSSSSDSEQQFIEDSQYNS). Residues 741 to 758 (SDDEEEEDDDDQEVDDNH) are compositionally biased toward acidic residues. Polar residues-rich tracts occupy residues 770 to 802 (LGKS…NFTG) and 822 to 833 (RNSSSGNFIFNS). The short motif at 873–879 (KKKALPK) is the Nuclear localization signal element. Polar residues predominate over residues 884–897 (SDSSQSFRIVNNTP). Thr896 bears the Phosphothreonine mark. Ser898 is subject to Phosphoserine. The segment covering 959-972 (KKVDSVQTTRKEAS) has biased composition (basic and acidic residues). The segment at 959–982 (KKVDSVQTTRKEASLTDSSNESLH) is disordered. Position 980 is a phosphoserine (Ser980).

As to quaternary structure, interacts with SAK1.

The protein localises to the nucleus. Functionally, involved in RNA processing and negative regulation of glucose repression. Regulates the level of two antigens, P43 and P70. Binds to protein phosphatase type 1. Functions with REG2 and SNF1 protein kinase to regulate growth. Might regulate SNF1 directly or indirectly. The chain is Resistance to glucose repression protein 1 (REG1) from Saccharomyces cerevisiae (strain ATCC 204508 / S288c) (Baker's yeast).